Reading from the N-terminus, the 153-residue chain is Arginine repressor (153 aa).

It belongs to the ArgR family.

It is found in the cytoplasm. Its pathway is amino-acid biosynthesis; L-arginine biosynthesis [regulation]. Its function is as follows. Regulates arginine biosynthesis genes. This chain is Arginine repressor, found in Actinobacillus pleuropneumoniae serotype 3 (strain JL03).